A 2190-amino-acid polypeptide reads, in one-letter code: Non-reducing polyketide synthase mapC' (2190 aa).

The tract at residues 14 to 268 (VLFGPQCPDI…HHEAHREGIQ (255 aa)) is N-terminal acylcarrier protein transacylase domain (SAT). The region spanning 401 to 817 (ASPIAITGMA…GSNAALIVKE (417 aa)) is the Ketosynthase family 3 (KS3) domain. Catalysis depends on for beta-ketoacyl synthase activity residues Cys566, His701, and His740. The tract at residues 893–1190 (CFGGQNGLTA…NVTSALWAQG (298 aa)) is malonyl-CoA:ACP transacylase (MAT) domain. Residue Ser979 is the For acyl/malonyl transferase activity of the active site. Residues 1243-1375 (GQEAGLLCQL…GTVCLHQERS (133 aa)) form an N-terminal hotdog fold region. The PKS/mFAS DH domain occupies 1243–1552 (GQEAGLLCQL…FTSVSIRSLT (310 aa)). The interval 1251-1556 (QLSESPDERL…SIRSLTRALA (306 aa)) is product template (PT) domain. His1277 acts as the Proton acceptor; for dehydratase activity in catalysis. The tract at residues 1401-1552 (ASNGLKGSTV…FTSVSIRSLT (152 aa)) is C-terminal hotdog fold. Asp1458 serves as the catalytic Proton donor; for dehydratase activity. The Carrier domain occupies 1597–1671 (ANDLATVQEM…GLVEHIFPGH (75 aa)). Ser1631 is modified (O-(pantetheine 4'-phosphoryl)serine). Residues 1840 to 2187 (ATMSPSKPIK…AEGYEFLRTH (348 aa)) form a methyltransferase (CMeT) domain region. Active-site for thioesterase activity residues include Ser1969, Asp2127, and His2159.

Its subcellular location is the cytoplasm. It localises to the cytosol. It carries out the reaction 3 malonyl-CoA + acetyl-CoA + S-adenosyl-L-methionine + H(+) = 5-methylorsellinate + S-adenosyl-L-homocysteine + 3 CO2 + 4 CoA. It functions in the pathway secondary metabolite biosynthesis; terpenoid biosynthesis. Non-reducing polyketide synthase; part of the gene cluster that mediates the biosynthesis of mycophenolic acid (MPA), the first isolated antibiotic natural product in the world obtained from a culture of Penicillium brevicompactum in 1893. MpaC' catalyzes the synthesis of 5-methylorsellinic acid (5MOA) via the condensation of 1 acetyl-CoA starter unit with 3 malonyl-CoA units and one methylation step. The first step of the pathway is the synthesis of 5-methylorsellinic acid (5MOA) by the cytosolic polyketide synthase mpaC. 5MOA is then converted to the phthalide compound 5,7-dihydroxy-4,6-dimethylphthalide (DHMP) by the endoplasmic reticulum-bound cytochrome P450 monooxygenase mpaDE. MpaDE first catalyzes hydroxylation of 5-MOA to 4,6-dihydroxy-2-(hydroxymethyl)-3-methylbenzoic acid (DHMB). MpaDE then acts as a lactone synthase that catalyzes the ring closure to convert DHMB into DHMP. The next step is the prenylation of DHMP by the Golgi apparatus-associated prenyltransferase mpaA to yield farnesyl-DHMP (FDHMP). The ER-bound oxygenase mpaB then mediates the oxidative cleavage the C19-C20 double bond in FDHMP to yield FDHMP-3C via a mycophenolic aldehyde intermediate. The O-methyltransferase mpaG catalyzes the methylation of FDHMP-3C to yield MFDHMP-3C. After the cytosolic methylation of FDHMP-3C, MFDHMP-3C enters into peroxisomes probably via free diffusion due to its low molecular weight. Upon a peroxisomal CoA ligation reaction, catalyzed by a beta-oxidation component enzyme acyl-CoA ligase ACL891, MFDHMP-3C-CoA would then be restricted to peroxisomes for the following beta-oxidation pathway steps. The peroxisomal beta-oxidation machinery than converts MFDHMP-3C-CoA into MPA_CoA, via a beta-oxidation chain-shortening process. Finally mpaH acts as a peroxisomal acyl-CoA hydrolase with high substrate specificity toward MPA-CoA to release the final product MPA. This Penicillium brevicompactum protein is Non-reducing polyketide synthase mapC'.